A 698-amino-acid polypeptide reads, in one-letter code: Pentatricopeptide repeat-containing protein 1, mitochondrial (698 aa).

The disordered stretch occupies residues 49–88 (SSSQLPLGQERQENTGSLGSDPSHSNSTATQEEDEEESFG). Residues 62-78 (NTGSLGSDPSHSNSTAT) show a composition bias toward polar residues. PPR repeat units follow at residues 133-169 (TPYW…RLQP), 170-204 (MESN…DLEP), 205-243 (SDAT…NFEL), 244-278 (NLKT…GHVV), 279-315 (TEET…GLQP), and 316-352 (SRDS…ATVL). Residues 392–419 (QALGPPEPPEARVPSKAQPEVDTKAEPS) are disordered. PPR repeat units follow at residues 517–551 (DLTF…GLVP), 552–583 (NLQT…QVTP), and 584–618 (NSHI…RVPV). The segment at 670–698 (HPWQKFRTKPQEDQDTRKEADDGCALGGR) is disordered. Over residues 678-690 (KPQEDQDTRKEAD) the composition is skewed to basic and acidic residues.

Belongs to the PTCD1 family. In terms of assembly, associates with mitochondrial leucine tRNAs. Interacts with ELAC2.

The protein localises to the mitochondrion. It localises to the mitochondrion matrix. Functionally, mitochondrial protein implicated in negative regulation of leucine tRNA levels, as well as negative regulation of mitochondria-encoded proteins and COX activity. Also affects the 3'-processing of mitochondrial tRNAs. The polypeptide is Pentatricopeptide repeat-containing protein 1, mitochondrial (PTCD1) (Pongo abelii (Sumatran orangutan)).